The primary structure comprises 445 residues: Glutamyl-tRNA(Gln) amidotransferase subunit D (445 aa).

An Asparaginase/glutaminase domain is found at 93–425 (SEIKIISTGG…EKIRSLMISN (333 aa)). Residues Thr103, Thr179, Asp180, and Lys258 contribute to the active site.

The protein belongs to the asparaginase 1 family. GatD subfamily. In terms of assembly, heterodimer of GatD and GatE.

It carries out the reaction L-glutamyl-tRNA(Gln) + L-glutamine + ATP + H2O = L-glutaminyl-tRNA(Gln) + L-glutamate + ADP + phosphate + H(+). Its function is as follows. Allows the formation of correctly charged Gln-tRNA(Gln) through the transamidation of misacylated Glu-tRNA(Gln) in organisms which lack glutaminyl-tRNA synthetase. The reaction takes place in the presence of glutamine and ATP through an activated gamma-phospho-Glu-tRNA(Gln). The GatDE system is specific for glutamate and does not act on aspartate. This chain is Glutamyl-tRNA(Gln) amidotransferase subunit D, found in Saccharolobus islandicus (strain Y.N.15.51 / Yellowstone #2) (Sulfolobus islandicus).